A 96-amino-acid chain; its full sequence is Probable quinol oxidase subunit 4 (96 aa).

The next 3 helical transmembrane spans lie at 8–28, 36–56, and 68–88; these read TVGFIASIVLTILAVFVTLYT, ITIIFGFAFIQAAVQLLMFMH, and FKVLFAIIITLITVIGTYWVM.

This sequence belongs to the cytochrome c oxidase bacterial subunit 4 family.

It localises to the cell membrane. The enzyme catalyses 2 a quinol + O2 = 2 a quinone + 2 H2O. In terms of biological role, catalyzes quinol oxidation with the concomitant reduction of oxygen to water. In Staphylococcus saprophyticus subsp. saprophyticus (strain ATCC 15305 / DSM 20229 / NCIMB 8711 / NCTC 7292 / S-41), this protein is Probable quinol oxidase subunit 4 (qoxD).